The sequence spans 81 residues: Small ribosomal subunit protein uS17 (81 aa).

This sequence belongs to the universal ribosomal protein uS17 family. In terms of assembly, part of the 30S ribosomal subunit.

Functionally, one of the primary rRNA binding proteins, it binds specifically to the 5'-end of 16S ribosomal RNA. This is Small ribosomal subunit protein uS17 from Trichormus variabilis (strain ATCC 29413 / PCC 7937) (Anabaena variabilis).